We begin with the raw amino-acid sequence, 439 residues long: GlutamylGlutaminyl-tRNA synthetase (439 aa).

Residues 6 to 16 (PSPTGDMHIGN) carry the 'HIGH' region motif. The 'KMSKS' region motif lies at 232-236 (KMSKR). K235 serves as a coordination point for ATP.

This sequence belongs to the class-I aminoacyl-tRNA synthetase family. Glutamate--tRNA ligase type 1 subfamily. Monomer.

The protein localises to the cytoplasm. The enzyme catalyses tRNA(Glu) + L-glutamate + ATP = L-glutamyl-tRNA(Gln) + AMP + diphosphate. Aminoacylates tRNA(Gln) with glutamate. Does not aminoacylate tRNA(Glu). The sequence is that of GlutamylGlutaminyl-tRNA synthetase (gltX2) from Helicobacter pylori (strain ATCC 700392 / 26695) (Campylobacter pylori).